A 430-amino-acid polypeptide reads, in one-letter code: Elongation factor 1-gamma (430 aa).

The GST N-terminal domain maps to 2-84 (VAGKLYTYPE…YVANETLRGS (83 aa)). The region spanning 85 to 213 (SDLEKAQIIQ…FKLCEKAGEF (129 aa)) is the GST C-terminal domain. Composition is skewed to basic and acidic residues over residues 232–255 (KTEKAPKAVKAKPEKKEVPKKEQE) and 269–278 (PKSKDPFDEM). Residues 232–278 (KTEKAPKAVKAKPEKKEVPKKEQEEPADAAEEALAAEPKSKDPFDEM) are disordered. In terms of domain architecture, EF-1-gamma C-terminal spans 271-430 (SKDPFDEMPK…RKFNQGKIFK (160 aa)).

As to quaternary structure, EF-1 is composed of four subunits: alpha, beta, delta, and gamma.

In terms of biological role, probably plays a role in anchoring the complex to other cellular components. The chain is Elongation factor 1-gamma from Artemia salina (Brine shrimp).